The primary structure comprises 305 residues: ATP synthase subunit gamma, mitochondrial (305 aa).

The protein belongs to the ATPase gamma chain family. As to quaternary structure, F-type ATPases have 2 components, F(1) - the catalytic core - and F(o) - the membrane proton channel. F(1) has five subunits: alpha(3), beta(3), gamma(1), delta(1), epsilon(1), plus the additional subunit P18 (Tb427.05.1710) that is not present in F(1)F(o) ATP synthase from metazoa. Subunit P18 (Tb927.5.1710) interacts with the alpha subunit with a 1:1 stoichiometry; the interaction is direct. Subunit gamma is part of the central stalk. F(o) has three main subunits: a, b and c. The trypanosomal ATPase complex contains additional subunits that are not present in the F(1)F(o) ATP synthase from metazoa.

It is found in the mitochondrion. The protein localises to the mitochondrion inner membrane. Its function is as follows. Mitochondrial membrane ATP synthase (F(1)F(o) ATP synthase) produces ATP from ADP in the presence of a proton gradient across the membrane which is generated by electron transport complexes of the respiratory chain. F-type ATPases consist of two structural domains, F(1) - containing the extramembraneous catalytic core, and F(o) - containing the membrane proton channel, linked together by a central stalk and a peripheral stalk. During catalysis, ATP synthesis in the catalytic domain of F(1) is coupled via a rotary mechanism of the central stalk subunits to proton translocation. Subunits alpha and beta form the catalytic core in F(1). Rotation of the central stalk against the surrounding alpha(3)beta(3) subunits leads to hydrolysis of ATP in three separate catalytic sites on the beta subunits. Contrary to the procyclic, insect form that requires F(1)F(o) ATP synthase for ATP synthesis, the bloodstream form relies on ATP hydrolysis by F(1)F(o) ATP synthase to maintain its mitochondrial membrane potential. The polypeptide is ATP synthase subunit gamma, mitochondrial (Trypanosoma brucei brucei).